Reading from the N-terminus, the 131-residue chain is Leptin receptor gene-related protein (131 aa).

A run of 4 helical transmembrane segments spans residues 7-27, 32-52, 69-89, and 100-120; these read LVAL…GCAL, VYWP…HFIA, LAYF…VILA, and GLVL…FLVF.

This sequence belongs to the OB-RGRP/VPS55 family. Interacts with LEPR. Interacts with RAB13.

The protein resides in the golgi apparatus membrane. The protein localises to the endosome membrane. Functionally, negatively regulates leptin receptor (LEPR) cell surface expression, and thus decreases response to leptin/LEP. Negatively regulates growth hormone (GH) receptor cell surface expression in liver. May play a role in liver resistance to GH during periods of reduced nutrient availability. The sequence is that of Leptin receptor gene-related protein (LEPROT) from Sus scrofa (Pig).